The sequence spans 302 residues: L-glutamate/L-aspartate-binding protein (302 aa).

A signal peptide spans 1-23 (MRIAPSLLSTAIVAALLSAPVVA).

Belongs to the bacterial solute-binding protein 3 family.

It is found in the periplasm. Functionally, binds L-glutamate and L-aspartate. This chain is L-glutamate/L-aspartate-binding protein, found in Pseudomonas aeruginosa (strain ATCC 15692 / DSM 22644 / CIP 104116 / JCM 14847 / LMG 12228 / 1C / PRS 101 / PAO1).